The sequence spans 279 residues: uncharacterized protein (279 aa).

Low complexity predominate over residues 1 to 29 (MSSRYTSSYTPSSRYGSGWDYSSSYSSSR). Disordered stretches follow at residues 1–111 (MSSR…APRE) and 137–233 (LTLA…AEAL). A compositionally biased stretch (basic and acidic residues) spans 30-44 (TSRDRDTGSYRDRDY). Low complexity predominate over residues 45–59 (SSTSYTSTRPRYSTY). Residues 142-153 (EPEESEEEEDDE) are compositionally biased toward acidic residues. Residues 170–186 (ESSPVSSPVKEVSSAAS) are compositionally biased toward low complexity. The span at 189–205 (ANDNGNETENRTPSPTV) shows a compositional bias: polar residues. The span at 221–233 (SDVKKEGGDAEAL) shows a compositional bias: basic and acidic residues.

This is an uncharacterized protein from Caenorhabditis elegans.